Reading from the N-terminus, the 400-residue chain is NADH-quinone oxidoreductase subunit D (400 aa).

It belongs to the complex I 49 kDa subunit family. In terms of assembly, NDH-1 is composed of 14 different subunits. Subunits NuoB, C, D, E, F, and G constitute the peripheral sector of the complex.

It localises to the cell inner membrane. The enzyme catalyses a quinone + NADH + 5 H(+)(in) = a quinol + NAD(+) + 4 H(+)(out). Its function is as follows. NDH-1 shuttles electrons from NADH, via FMN and iron-sulfur (Fe-S) centers, to quinones in the respiratory chain. The immediate electron acceptor for the enzyme in this species is believed to be a menaquinone. Couples the redox reaction to proton translocation (for every two electrons transferred, four hydrogen ions are translocated across the cytoplasmic membrane), and thus conserves the redox energy in a proton gradient. This is NADH-quinone oxidoreductase subunit D from Chlorobium phaeovibrioides (strain DSM 265 / 1930) (Prosthecochloris vibrioformis (strain DSM 265)).